The chain runs to 927 residues: Small conductance calcium-activated potassium channel protein (927 aa).

Polar residues predominate over residues 1–31 (MSIQKLNDTTNSGYVSSEETDSLLVSSSNPS). 3 disordered regions span residues 1–131 (MSIQ…EDVE), 181–251 (LSLK…VKSA), and 296–336 (HLHQ…SSST). The span at 45–62 (SNSTNGPTTGASTSSSGS) shows a compositional bias: low complexity. A compositionally biased stretch (gly residues) spans 63 to 77 (VSGGGGGSGSGGGSA). Composition is skewed to polar residues over residues 95-107 (TSTY…QSQH) and 200-214 (NLGT…SSIP). Composition is skewed to low complexity over residues 219-232 (SRCR…RRAS) and 296-308 (HLHQ…SQQQ). The segment covering 314 to 336 (ITSSPTNGSRIIRQSSQPESSST) has biased composition (polar residues). The chain crosses the membrane as a helical span at residues 489 to 509 (ALVMGMFGIIVMVIENELSSA). Residues 530 to 550 (TVILLGLIVAYHALEVQLFMI) traverse the membrane as a helical segment. The chain crosses the membrane as a helical span at residues 569–589 (IGLELFICAIHPIPGEYYFQW). The helical transmembrane segment at 609-629 (VALSLPMFLRLYLICRVMLLH) threads the bilayer. A helical transmembrane segment spans residues 658-678 (LMTICPGTVLLVFMVSLWIIA). An intramembrane region (pore-forming) is located at residues 696–716 (LLNSMWLTAITFLCVGYGDIV). The chain crosses the membrane as a helical span at residues 724–744 (GITLTCGMVGAGCTALLVAVV). Residues 763 to 839 (DTQLTKRLKN…ITDMAKTQNT (77 aa)) form a calmodulin-binding region.

The protein belongs to the potassium channel KCNN family. SK subfamily. Heterooligomer. The complex is composed of 4 channel subunits each of which binds to a calmodulin subunit which regulates the channel activity through calcium-binding.

It is found in the membrane. Forms a voltage-independent potassium channel activated by intracellular calcium. Activation is followed by membrane hyperpolarization. Thought to regulate neuronal excitability by contributing to the slow component of synaptic afterhyperpolarization. The channel is blocked by apamin. This is Small conductance calcium-activated potassium channel protein from Drosophila melanogaster (Fruit fly).